We begin with the raw amino-acid sequence, 1524 residues long: MKKEVRKVRIALASPEKIRSWSYGEVEKPETINYRTLKPERDGLFDERIFGPIKDYECACGKYKRQRFEGKVCERCGVEVTKSIVRRYRMGHIELATPAAHIWFVKDVPSKIGTLLDLSATELEQVLYFSKYIVLDPKGAILNGVPVEKRQLLTDEEYRELRYGKQETYPLPPGVDALVKDGEEVVKGQELAPGVVSRLDGVALYRFPRRVRVEYVKKERAGLRLPLAAWVEKEAYKPGEILAELPEPYLFRAEEEGVVELKELEEGAFLVLRQEDEPVATYFLPVGMTPLVVHGEIVEKGQPLAEAKGLLRMPRQVRAAQVEAEEEGETVYLTLFLEWTEPKDYRVQPHMNVVVPEGARVEAGDKIVAAIDPEEEVIAEAEGVVHLHEPASILVVKARVYPFEDDVEVSTGDRVAPGDVLADGGKVKSDVYGRVEVDLVRNVVRVVESYDIDARMGAEAIQQLLKELDLEALEKELLEEMKHPSRARRAKARKRLEVVRAFLDSGNRPEWMILEAVPVLPPDLRPMVQVDGGRFATSDLNDLYRRLINRNNRLKKLLAQGAPEIIIRNEKRMLQEAVDALLDNGRRGAPVTNPGSDRPLRSLTDILSGKQGRFRQNLLGKRVDYSGRSVIVVGPQLKLHQCGLPKRMALELFKPFLLKKMEEKGIAPNVKAARRMLERQRDIKDEVWDALEEVIHGKVVLLNRAPTLHRLGIQAFQPVLVEGQSIQLHPLVCEAFNADFDGDQMAVHVPLSSFAQAEARIQMLSAHNLLSPASGEPLAKPSRDIILGLYYITQVRKEKKGAGLEFATPEEALAAHERGEVALNAPIKVAGRETSVGRLKYVFANPDEALLAVAHGIVDLQDVVTVRYMGKRLETSPGRILFARIVAEAVEDEKVAWELIQLDVPQEKNSLKDLVYQAFLRLGMEKTARLLDALKYYGFTFSTTSGITIGIDDAVIPEEKKQYLEEADRKLLQIEQAYEMGFLTDRERYDQILQLWTETTEKVTQAVFKNFEENYPFNPLYVMAQSGARGNPQQIRQLCGMRGLMQKPSGETFEVPVRSSFREGLTVLEYFISSHGARKGGADTALRTADSGYLTRKLVDVTHEIVVREADCGTTNYISVPLFQPDEVTRSLRLRKRADIEAGLYGRVLAREVEVLGVRLEEGRYLSMDDVHLLIKAAEAGEIQEVPVRSPLTCQTRYGVCQKCYGYDLSMARPVSIGEAVGIVAAQSIGEPGTQLTMRTFHTGGVAGAADITQGLPRVIELFEARRPKAKAVISEIDGVVRIEETEEKLSVFVESEGFSKEYKLPKEARLLAKDGDYVEAGQPLTRGAIDPHQLLEAKGPEAVERYLVEEIQKVYRAQGVKLHDKHIEIVVRQMMKYVEVTDPGDSRLLEGQVLEKWDVEALNERLIAEGKTPVAWKPLLMGVTKSALSTKSWLSAASFQNTTHVLTEAAIAGKKDELIGLKENVILGRLIPAGTGSDFVRFTQVVDQKTLKAIEEARKEAVEAKERPAARRGVKREQPGKQA.

4 residues coordinate Zn(2+): C58, C60, C73, and C76. Mg(2+) contacts are provided by D739, D741, and D743. Zn(2+) contacts are provided by C1112, C1194, C1201, and C1204. The disordered stretch occupies residues 1501–1524 (EAVEAKERPAARRGVKREQPGKQA).

The protein belongs to the RNA polymerase beta' chain family. As to quaternary structure, the RNAP catalytic core consists of 2 alpha, 1 beta, 1 beta' and 1 omega subunit. When a sigma factor is associated with the core the holoenzyme is formed, which can initiate transcription. Mg(2+) is required as a cofactor. It depends on Zn(2+) as a cofactor.

It catalyses the reaction RNA(n) + a ribonucleoside 5'-triphosphate = RNA(n+1) + diphosphate. Functionally, DNA-dependent RNA polymerase catalyzes the transcription of DNA into RNA using the four ribonucleoside triphosphates as substrates. This chain is DNA-directed RNA polymerase subunit beta', found in Thermus thermophilus (strain ATCC BAA-163 / DSM 7039 / HB27).